The sequence spans 226 residues: UPF0758 protein SE_1336 (226 aa).

The MPN domain maps to 102 to 224 (QITHPSDVAS…FTSLVEAGYF (123 aa)). His-173, His-175, and Asp-186 together coordinate Zn(2+). The short motif at 173-186 (HNHPSGDVTPSKED) is the JAMM motif element.

It belongs to the UPF0758 family.

This chain is UPF0758 protein SE_1336, found in Staphylococcus epidermidis (strain ATCC 12228 / FDA PCI 1200).